Here is a 144-residue protein sequence, read N- to C-terminus: C-C motif chemokine 25 (144 aa).

An N-terminal signal peptide occupies residues 1–23; sequence MKLWLFACLVACFVGAWMPVVHA. 2 disulfides stabilise this stretch: cysteine 30–cysteine 58 and cysteine 31–cysteine 73. The segment at 98–144 is disordered; the sequence is KSASDSQTERKKSNHMKSKVENPNSTSVRSATLGHPRMVMMPRKTNN. Positions 118–127 are enriched in polar residues; sequence ENPNSTSVRS.

This sequence belongs to the intercrine beta (chemokine CC) family. In terms of tissue distribution, specifically expressed by thymic dendritic cells. High levels in thymus and small intestine.

It localises to the secreted. Its function is as follows. Potentially involved in T-cell development. Recombinant protein shows chemotactic activity on thymocytes, macrophages, THP-1 cells, and dendritics cells but is inactive on peripheral blood lymphocytes and neutrophils. Binds to CCR9. Binds to atypical chemokine receptor ACKR4 and mediates the recruitment of beta-arrestin (ARRB1/2) to ACKR4. This Mus musculus (Mouse) protein is C-C motif chemokine 25 (Ccl25).